A 1906-amino-acid chain; its full sequence is MRVAKWLTGLLCPISLLLTGSWEVRFHPRQEALVKTLASYEVVTPTRVNEFGDVFPQNRHFSRKKRSSGVPEPPPFRTHYRISAYGQLFQLNLSADAAFLAAGYTEVHLGTPVPGPGGRSTESPDLRHCFYRGQVNAREDHTAVFSLCGGLMGTFKANDGEYFLEPVLRADGSAHDDDHNKPHLIYRQELKRNSFARSHKPCEVSENQMEKTALPSQSSRNTTGDVDIEEEAVFRLEGERSQLHSRNKRFLSYPRYVEVMVTADAKMVHHHGQNLQHYVLTLMSIVAAIYKDSSIGNLINIVIVKLVVIHSEQEGPVISFNAATTLRNFCLWQQSQNVPDDAHPSHHDTAVLITREDICGAKEKCDTLGLAELGTLCDPSRSCSISEENGLSAAFTIAHELGHVFNVPHDDSFKCKEAGIKHQYHVMAPTLNYHTSPWTWSACSQKHITEFLDTGHGECLLDKPNGRTYDLSPQLPGSVYDGNRQCELMFGPGSQVCPYLKHCRRLWCTSAEGVHKGCRTQHMPLADGTSCGPGMHCHRGLCVTRDMETRPVDGEWGPWGPYSSCSRTCGGGIKSTARLCDRPEPRNGGRYCVGRRMKFRSCNTDSCPKGKRDFREKQCSDFDGKHFDINGLPPNVRWLPKYSGIAVKDRCKLYCRVAGTTSFYQLKDRVADGTPCGTETNDICVQGLCRQAGCDHVLNSKAKRDKCGVCGGDNSSCQTLAGVFNSAHYGYNVVVKIPAGATNIEILQHSYSGRPEDDNYLALSDTQGNFLLNGNFVVSMAKKEINIQGAVFEYSGSNNSIERINSTDRLEAELVLQVLCVGNLYNPDVRYSFNIPIEERSNLFSWDPYGPWQDCTKMCQGLHRRKIACVRKSDHAVVSDHNCGHLPMPLFVTEKCNMDCELRWHIIGKSDCSSQCGQGYRTLDVHCMKYSVHKGQAVPVGDQYCGDQLKPPSREPCHGSCVLTRWHYSEWSQCSRSCGGGDKTRESYCVNGFGHRLAESECRELPRVVLENCNEFPCPSWATSEWSECPVTCGKGMKQRQVWCQLSEDPMRDGFCNASTKPESLRPCELRACASWHVGPWGSCTATCGHGYQMRAVKCISEIFGTMLDDRECPQASRPSDRQDCILAPCLAIPEVGATSLPAIPLGRAAQWRHGSWTPCSVSCGRGSQARYVSCRDAHDEVADESNCAHLPRPAAVSLCFSPCGEWQAGDWSPCSASCGHGKTTRRVLCVNYHQLVDESYCDPEGRPVTEQECSLAACPPLYSRAPSSSEQPSHVPSRNVPLTHKPGENQDQGAQLSIRGNQWRTGPWGACSRSCAGGLQHRAVVCQDEDGRSATSCDGSSKPPESRHCGSGPCPHWNYGDWGECTQTCGGGVKSRFVICQFPNGQMTQEHSCELPKPPSMMQCHLHACPEDVSWYRGPWKSCSASCGKGVKYREVLCIDQFQRKLEEKYCSHLHKPRTHKACRSGRCPSWKANKWKECSVTCGSGVQQREVYCRLRGTGRVSEDMCDPSTRPQGQRQCWRQDCMRYQWTTGDWLDCSTSCKKKETYRLVKCVNEQNVQANESLCDPLTKPLSIKKCRNPHCKYSVVTGDSSQCAGNCGFTSPQKITYCTKIQSSKKHTFHQLRPVVYGECPVIPSPQAYKCDLRSCLHVATWKVGKWSKCSVTCGIGIMERRVACRTENGWPSDLCLKRLKPDAQKKCYANDCKLLTTCKELQVTNNVTKDGDYDLNVRGRILKIHCSGMQLENPREYLPLVKSEDNFSEIYGLRLQNPYECPFNGSRRPDCACENDYLPAGYTVFSKVRVDLESMQIKTADLLFSQTLSGKAVPFATAGDCYSAARCPQGQFSINLAGTGMKISNTAKWLAQGRYASVIIHRSQDGTKVYGRCGGFCGKCIPHMATGLSIQVL.

The signal sequence occupies residues 1–26 (MRVAKWLTGLLCPISLLLTGSWEVRF). Positions 27-249 (HPRQEALVKT…RSQLHSRNKR (223 aa)) are excised as a propeptide. N-linked (GlcNAc...) asparagine glycosylation is found at asparagine 92 and asparagine 221. A disordered region spans residues 201–222 (PCEVSENQMEKTALPSQSSRNT). Residues 255-464 (RYVEVMVTAD…GHGECLLDKP (210 aa)) enclose the Peptidase M12B domain. 11 disulfide bridges follow: cysteine 330–cysteine 383, cysteine 359–cysteine 365, cysteine 377–cysteine 459, cysteine 415–cysteine 443, cysteine 486–cysteine 508, cysteine 497–cysteine 518, cysteine 503–cysteine 537, cysteine 531–cysteine 542, cysteine 565–cysteine 602, cysteine 569–cysteine 607, and cysteine 580–cysteine 592. Histidine 399 serves as a coordination point for Zn(2+). Glutamate 400 is an active-site residue. Zn(2+)-binding residues include histidine 403 and histidine 409. The Disintegrin domain occupies 465-552 (NGRTYDLSPQ…VTRDMETRPV (88 aa)). Residues 553-608 (DGEWGPWGPYSSCSRTCGGGIKSTARLCDRPEPRNGGRYCVGRRMKFRSCNTDSCP) form the TSP type-1 1 domain. Asparagine 714, asparagine 798, and asparagine 805 each carry an N-linked (GlcNAc...) asparagine glycan. The spacer stretch occupies residues 721–842 (AGVFNSAHYG…FNIPIEERSN (122 aa)). TSP type-1 domains follow at residues 843–901 (LFSW…MDCE), 906–962 (IIGK…GSCV), 962–1015 (VLTR…NCNE), 1017–1074 (PCPS…RACA), 1075–1131 (SWHV…APCL), 1148–1202 (RAAQ…LCFS), and 1203–1260 (PCGE…AACP). An N-linked (GlcNAc...) asparagine glycan is attached at asparagine 1057. Residues 1265 to 1295 (RAPSSSEQPSHVPSRNVPLTHKPGENQDQGA) form a disordered region. The segment covering 1266 to 1277 (APSSSEQPSHVP) has biased composition (polar residues). 7 TSP type-1 domains span residues 1300–1351 (RGNQ…RHCG), 1354–1411 (PCPH…HACP), 1412–1465 (EDVS…KACR), 1468–1526 (RCPS…QDCM), 1527–1584 (RYQW…PHCK), 1585–1648 (YSVV…LRSC), and 1650–1706 (HVAT…NDCK). N-linked (GlcNAc...) asparagine glycosylation is present at asparagine 1562. In terms of domain architecture, GON spans 1707–1906 (LLTTCKELQV…MATGLSIQVL (200 aa)). Residues asparagine 1719, asparagine 1759, and asparagine 1777 are each glycosylated (N-linked (GlcNAc...) asparagine).

Zn(2+) is required as a cofactor. Post-translationally, the precursor is cleaved by a furin endopeptidase. Glycosylated. Can be O-fucosylated by POFUT2 on a serine or a threonine residue found within the consensus sequence C1-X(2)-(S/T)-C2-G of the TSP type-1 repeat domains where C1 and C2 are the first and second cysteine residue of the repeat, respectively. Fucosylated repeats can then be further glycosylated by the addition of a beta-1,3-glucose residue by the glucosyltransferase, B3GALTL. Fucosylation mediates the efficient secretion of ADAMTS family members. Can also be C-glycosylated with one or two mannose molecules on tryptophan residues within the consensus sequence W-X-X-W of the TPRs, and N-glycosylated. These other glycosylations can also facilitate secretion. Expressed at low level in testis and brain.

The protein localises to the secreted. Its subcellular location is the extracellular space. It is found in the extracellular matrix. May play a role in tissue-remodeling process occurring in both normal and pathological conditions. May have a protease-independent function in the transport from the endoplasmic reticulum to the Golgi apparatus of secretory cargos, mediated by the GON domain. The sequence is that of A disintegrin and metalloproteinase with thrombospondin motifs 20 (Adamts20) from Mus musculus (Mouse).